The primary structure comprises 683 residues: Cytoskeleton-associated protein 2 (683 aa).

2 disordered regions span residues 1 to 28 and 153 to 175; these read MSTP…QRRQ and NSKK…KKPV. A phosphoserine mark is found at Ser178 and Ser190. 2 disordered regions span residues 214–236 and 336–403; these read KATK…SSNM and EKSE…EKPV. The segment covering 219–236 has biased composition (polar residues); the sequence is QPVNTSSVTVKSNRSSNM. Basic and acidic residues-rich tracts occupy residues 336 to 345 and 362 to 376; these read EKSEPVDQRR and ETSE…EWKA. Ser534 carries the post-translational modification Phosphoserine. Residues Thr579 and Thr582 each carry the phosphothreonine modification. A Phosphoserine modification is found at Ser595. Phosphothreonine occurs at positions 596 and 597. Tyr599 carries the post-translational modification Phosphotyrosine. Position 602 is a phosphoserine (Ser602).

The protein belongs to the CKAP2 family. In terms of assembly, associates with alpha- and beta-tubulins. As to expression, abundant in testis, thymus, and in tumor derived cell lines, while barely detectable in liver, prostate, and kidney.

It is found in the cytoplasm. The protein resides in the cytoskeleton. The protein localises to the spindle. Its subcellular location is the spindle pole. In terms of biological role, possesses microtubule stabilizing properties. Involved in regulating aneuploidy, cell cycling, and cell death in a p53/TP53-dependent manner. This chain is Cytoskeleton-associated protein 2, found in Homo sapiens (Human).